The following is a 471-amino-acid chain: V-type ATP synthase beta chain (471 aa).

This sequence belongs to the ATPase alpha/beta chains family.

Produces ATP from ADP in the presence of a proton gradient across the membrane. The V-type beta chain is a regulatory subunit. The chain is V-type ATP synthase beta chain from Streptococcus pyogenes serotype M49 (strain NZ131).